A 549-amino-acid chain; its full sequence is MKIKRLDKSIVSRIAAGEVITGVYSVVKELIENSIDAGADRIVVELINGGKSEIKVQDNGEGMEKDDLLVCYESHTTSKIDSFQDIYTLNSFGFRGEALYSICQISKTTIFSKTASSNLGHEIEVVAGHLVYEKPVQIEKGTTVIVRDLFFNVPARRKFLKSNAVEARMAVEVFERFCLSHPHINLILTKDQQVVYNLPATTLVQRIKALFPDIPMDSLKAIQSQWKDMELHGCAVSPANLRRKKAIFTFVNGRFVVNQLLQSAIYSAYADFLHQKEHPVVIVNLFLPPKDIDVNVHPQKIEVKFSRDEEVFRFVRDSIKSQLKIPIIHHISRNTPAKVQKRQVEYKSPNAKFTTTSEEMLIPPEDFKIIGIVRKRYIIVETEDELFIVDFHAAHERLIYNKMLSSLNQNDGTDLLIPVQIELRESELALIEKNNVLKQIGFDYEIIKNQLIVKKIPTWLDQSDVKRFIIDSIDEIKLIDIYGLEEVMKKIIADISCKSALRTRDRLDLSQAKYLVREIFANKISTCPHGRPVMYSINFKELDSFFERI.

This sequence belongs to the DNA mismatch repair MutL/HexB family.

Its function is as follows. This protein is involved in the repair of mismatches in DNA. It is required for dam-dependent methyl-directed DNA mismatch repair. May act as a 'molecular matchmaker', a protein that promotes the formation of a stable complex between two or more DNA-binding proteins in an ATP-dependent manner without itself being part of a final effector complex. This Pseudothermotoga lettingae (strain ATCC BAA-301 / DSM 14385 / NBRC 107922 / TMO) (Thermotoga lettingae) protein is DNA mismatch repair protein MutL.